Reading from the N-terminus, the 463-residue chain is uncharacterized protein (463 aa).

It belongs to the mycobacterial PPE family.

This is an uncharacterized protein from Mycobacterium tuberculosis (strain ATCC 25618 / H37Rv).